Consider the following 338-residue polypeptide: Malate dehydrogenase, mitochondrial (338 aa).

The N-terminal 24 residues, Met-1 to Asn-24, are a transit peptide targeting the mitochondrion. NAD(+)-binding positions include Gly-31–Gly-37 and Asp-57. O-linked (GlcNAc) serine glycosylation is present at Ser-33. An N6-acetyllysine; alternate mark is found at Lys-78 and Lys-91. 2 positions are modified to N6-succinyllysine; alternate: Lys-78 and Lys-91. Arg-104 and Arg-110 together coordinate substrate. Residues Asn-117 and Ile-140–Asn-142 contribute to the NAD(+) site. Position 142 (Asn-142) interacts with substrate. Lys-165 carries the N6-acetyllysine modification. Arg-176 provides a ligand contact to substrate. Lys-185 is subject to N6-acetyllysine; alternate. Lys-185 is modified (N6-succinyllysine; alternate). His-200 acts as the Proton acceptor in catalysis. N6-succinyllysine is present on Lys-203. N6-acetyllysine; alternate is present on residues Lys-215 and Lys-239. N6-succinyllysine; alternate is present on residues Lys-215 and Lys-239. Lys-239 is subject to N6-malonyllysine; alternate. Ser-246 carries the phosphoserine modification. Met-251 is an NAD(+) binding site. At Lys-269 the chain carries N6-succinyllysine. N6-acetyllysine; alternate occurs at positions 296, 301, 307, 314, and 324. 5 positions are modified to N6-succinyllysine; alternate: Lys-296, Lys-301, Lys-307, Lys-314, and Lys-324. Residue Lys-307 is modified to N6-malonyllysine; alternate. Ser-326 is subject to Phosphoserine. 3 positions are modified to N6-acetyllysine; alternate: Lys-328, Lys-329, and Lys-335. Lys-328 carries the post-translational modification N6-succinyllysine; alternate. N6-malonyllysine; alternate is present on Lys-329. Lys-335 carries the post-translational modification N6-succinyllysine; alternate.

It belongs to the LDH/MDH superfamily. MDH type 1 family. In terms of assembly, homodimer. Post-translationally, acetylation is enhanced after treatment either with trichostin A (TCA) or with nicotinamide (NAM) with the appearance of tri- and tetraacetylations. Glucose also increases acetylation.

It is found in the mitochondrion matrix. It carries out the reaction (S)-malate + NAD(+) = oxaloacetate + NADH + H(+). With respect to regulation, enzyme activity is enhanced by acetylation. This Bos taurus (Bovine) protein is Malate dehydrogenase, mitochondrial (MDH2).